The chain runs to 75 residues: Small ribosomal subunit protein bS18 (75 aa).

Belongs to the bacterial ribosomal protein bS18 family. In terms of assembly, part of the 30S ribosomal subunit. Forms a tight heterodimer with protein bS6.

Binds as a heterodimer with protein bS6 to the central domain of the 16S rRNA, where it helps stabilize the platform of the 30S subunit. This chain is Small ribosomal subunit protein bS18, found in Saccharophagus degradans (strain 2-40 / ATCC 43961 / DSM 17024).